We begin with the raw amino-acid sequence, 253 residues long: 5-oxoprolinase subunit A (253 aa).

Belongs to the LamB/PxpA family. Forms a complex composed of PxpA, PxpB and PxpC.

It carries out the reaction 5-oxo-L-proline + ATP + 2 H2O = L-glutamate + ADP + phosphate + H(+). In terms of biological role, catalyzes the cleavage of 5-oxoproline to form L-glutamate coupled to the hydrolysis of ATP to ADP and inorganic phosphate. This is 5-oxoprolinase subunit A from Azorhizobium caulinodans (strain ATCC 43989 / DSM 5975 / JCM 20966 / LMG 6465 / NBRC 14845 / NCIMB 13405 / ORS 571).